The following is an 81-amino-acid chain: Photosystem I iron-sulfur center (81 aa).

2 consecutive 4Fe-4S ferredoxin-type domains span residues 2–31 and 39–68; these read SHSV…MVPW and IASS…IRVY. Positions 11, 14, 17, 21, 48, 51, 54, and 58 each coordinate [4Fe-4S] cluster.

In terms of assembly, the cyanobacterial PSI reaction center is composed of one copy each of PsaA,B,C,D,E,F,I,J,K,L,M and X, and forms trimeric complexes. It depends on [4Fe-4S] cluster as a cofactor.

The protein resides in the cellular thylakoid membrane. The catalysed reaction is reduced [plastocyanin] + hnu + oxidized [2Fe-2S]-[ferredoxin] = oxidized [plastocyanin] + reduced [2Fe-2S]-[ferredoxin]. In terms of biological role, apoprotein for the two 4Fe-4S centers FA and FB of photosystem I (PSI); essential for photochemical activity. FB is the terminal electron acceptor of PSI, donating electrons to ferredoxin. The C-terminus interacts with PsaA/B/D and helps assemble the protein into the PSI complex. Required for binding of PsaD and PsaE to PSI. PSI is a plastocyanin/cytochrome c6-ferredoxin oxidoreductase, converting photonic excitation into a charge separation, which transfers an electron from the donor P700 chlorophyll pair to the spectroscopically characterized acceptors A0, A1, FX, FA and FB in turn. Its function is as follows. Mutant proteins with a 3Fe-4S center are unable to reconstitute PSI activity in vivo. The protein is Photosystem I iron-sulfur center of Synechocystis sp. (strain ATCC 27184 / PCC 6803 / Kazusa).